Here is a 442-residue protein sequence, read N- to C-terminus: UDP-N-acetylmuramate--L-alanine ligase (442 aa).

110 to 116 (GAHGKTS) provides a ligand contact to ATP.

Belongs to the MurCDEF family.

The protein resides in the cytoplasm. The enzyme catalyses UDP-N-acetyl-alpha-D-muramate + L-alanine + ATP = UDP-N-acetyl-alpha-D-muramoyl-L-alanine + ADP + phosphate + H(+). It participates in cell wall biogenesis; peptidoglycan biosynthesis. Its function is as follows. Cell wall formation. The chain is UDP-N-acetylmuramate--L-alanine ligase from Streptococcus thermophilus (strain ATCC BAA-491 / LMD-9).